The primary structure comprises 524 residues: GMP synthase [glutamine-hydrolyzing] (524 aa).

One can recognise a Glutamine amidotransferase type-1 domain in the interval 10–199; it reads PVLVVDFGAQ…LTEVAGLEQT (190 aa). The active-site Nucleophile is cysteine 87. Catalysis depends on residues histidine 173 and glutamate 175. Residues 200–398 enclose the GMPS ATP-PPase domain; it reads WTSANIAQQL…LGLPEEIVAR (199 aa). 228–234 lines the ATP pocket; that stretch reads SGGVDSA.

As to quaternary structure, homodimer.

The catalysed reaction is XMP + L-glutamine + ATP + H2O = GMP + L-glutamate + AMP + diphosphate + 2 H(+). It participates in purine metabolism; GMP biosynthesis; GMP from XMP (L-Gln route): step 1/1. In terms of biological role, catalyzes the synthesis of GMP from XMP. This Corynebacterium ammoniagenes (Brevibacterium ammoniagenes) protein is GMP synthase [glutamine-hydrolyzing] (guaA).